The sequence spans 708 residues: F-box only protein 43 (708 aa).

Residues 35–55 are disordered; it reads MSQRHSGQAGTEAGNGADSPP. Phosphoserine is present on S76. T234 bears the Phosphothreonine mark. Residues 320 to 426 form a disordered region; the sequence is PSPEVRGSIS…ISEGQLSSDE (107 aa). The span at 327–337 shows a compositional bias: polar residues; sequence SISTPEDSGFN. S334 carries the phosphoserine modification. Over residues 374–385 the composition is skewed to basic residues; that stretch reads KTRHLGRSRRLS. A compositionally biased stretch (basic and acidic residues) spans 399-411; it reads EKQIVHPDSEKRA. Positions 490 to 547 constitute an F-box domain; sequence MGIEKLDILTELKYRNLKHILAMVLESLTAESLCSVWKVSRNWREIVVQDKNANRRRK. The ZBR-type zinc-finger motif lies at 636 to 684; it reads ALKPCPRCQSPAKYQPYKKRGLCSRTACGFDFCVLCLCAYHGSEECSRG. 8 residues coordinate Zn(2+): C640, C643, C658, C663, C668, C671, H676, and C681. Residues 682–708 form a disordered region; sequence SRGAAKPRNRKDALPGSAQSKRNLKRL.

Part of a SCF (SKP1-cullin-F-box) protein ligase complex. According to PubMed:34595750 interaction with SKP1 does not occur. Interacts with ANAPC2; the interaction is direct, ANAPC4, CDC16, CDC23; the interaction is direct, ANAPC10; the interaction is direct and CDC26, during spermatogenesis. May interact with CDC20. Post-translationally, phosphorylated on Ser-76, Thr-234 and Ser-334 in response to calcium, which is a prerequisite for ubiquitination and proteasomal degradation. In terms of processing, ubiquitinated in response to calcium, which promotes proteasomal degradation. In terms of tissue distribution, expressed in the testis.

Its pathway is protein modification; protein ubiquitination. Its function is as follows. Required to establish and maintain the arrest of oocytes at the second meiotic metaphase until fertilization. Acts by inhibiting the anaphase-promoting complex/cyclosome (APC/C) ubiquitin ligase. Probably recognizes and binds to some phosphorylated proteins and promotes their ubiquitination and degradation. Plays a vital role in modulating the ubiquitilation of CCNB1 and CDK1 during gametogenesis. This chain is F-box only protein 43 (FBXO43), found in Homo sapiens (Human).